We begin with the raw amino-acid sequence, 288 residues long: NH(3)-dependent NAD(+) synthetase (288 aa).

Residue Gly46–Ser53 coordinates ATP. Asp52 provides a ligand contact to Mg(2+). Arg153 provides a ligand contact to deamido-NAD(+). Residue Thr173 coordinates ATP. Glu178 is a Mg(2+) binding site. Residues Lys186 and Asp193 each coordinate deamido-NAD(+). The ATP site is built by Lys202 and Thr224. Position 273–274 (His273–Lys274) interacts with deamido-NAD(+).

Belongs to the NAD synthetase family. As to quaternary structure, homodimer.

The enzyme catalyses deamido-NAD(+) + NH4(+) + ATP = AMP + diphosphate + NAD(+) + H(+). The protein operates within cofactor biosynthesis; NAD(+) biosynthesis; NAD(+) from deamido-NAD(+) (ammonia route): step 1/1. Catalyzes the ATP-dependent amidation of deamido-NAD to form NAD. Uses ammonia as a nitrogen source. The chain is NH(3)-dependent NAD(+) synthetase from Deinococcus geothermalis (strain DSM 11300 / CIP 105573 / AG-3a).